The following is a 120-amino-acid chain: Spermidine export protein MdtJ (120 aa).

The next 4 membrane-spanning stretches (helical) occupy residues 1–21 (MFYW…TLSM), 31–51 (TGFI…AFAV), 54–74 (IALG…ITLF), and 81–101 (ESLS…IVLI).

This sequence belongs to the drug/metabolite transporter (DMT) superfamily. Small multidrug resistance (SMR) (TC 2.A.7.1) family. MdtJ subfamily. As to quaternary structure, forms a complex with MdtI.

Its subcellular location is the cell inner membrane. Functionally, catalyzes the excretion of spermidine. The protein is Spermidine export protein MdtJ of Klebsiella pneumoniae subsp. pneumoniae (strain ATCC 700721 / MGH 78578).